A 384-amino-acid chain; its full sequence is Branched-chain-amino-acid aminotransferase 1, mitochondrial (384 aa).

A mitochondrion-targeting transit peptide spans 1-18; that stretch reads MALRRCLPQYSTTSSYLS. Residue Lys231 is modified to N6-(pyridoxal phosphate)lysine.

The protein belongs to the class-IV pyridoxal-phosphate-dependent aminotransferase family. Requires pyridoxal 5'-phosphate as cofactor.

The protein resides in the mitochondrion. The enzyme catalyses L-leucine + 2-oxoglutarate = 4-methyl-2-oxopentanoate + L-glutamate. It carries out the reaction L-isoleucine + 2-oxoglutarate = (S)-3-methyl-2-oxopentanoate + L-glutamate. It catalyses the reaction L-valine + 2-oxoglutarate = 3-methyl-2-oxobutanoate + L-glutamate. It functions in the pathway amino-acid degradation; L-leucine degradation; 4-methyl-2-oxopentanoate from L-leucine (aminotransferase route): step 1/1. Its pathway is amino-acid degradation; L-valine degradation. Converts 2-oxo acids to branched-chain amino acids. Acts on leucine, isoleucine and valine. The protein is Branched-chain-amino-acid aminotransferase 1, mitochondrial (BCAT1) of Arabidopsis thaliana (Mouse-ear cress).